The primary structure comprises 91 residues: Ice-structuring protein 2A7 (91 aa).

A signal peptide spans 1-21; it reads MALSLFTVGQLIFLFWTMRIT. A propeptide spans 22–39 (removed by a dipeptidylpeptidase); the sequence is EANPDPAAKAVPAAAAPD.

The protein belongs to the type-I AFP family. As to expression, detected in blood serum (at protein level).

Its subcellular location is the secreted. Contributes to protect fish blood from freezing at subzero sea water temperatures. Lowers the blood freezing point. Binds to nascent ice crystals and prevents further growth. The chain is Ice-structuring protein 2A7 from Pseudopleuronectes americanus (Winter flounder).